Consider the following 500-residue polypeptide: Protein nucleotidyltransferase YdiU (500 aa).

8 residues coordinate ATP: G98, G100, R101, K124, D136, G137, R187, and R194. The active-site Proton acceptor is the D263. Mg(2+) contacts are provided by N264 and D273. D273 is an ATP binding site.

The protein belongs to the SELO family. Mg(2+) serves as cofactor. The cofactor is Mn(2+).

It catalyses the reaction L-seryl-[protein] + ATP = 3-O-(5'-adenylyl)-L-seryl-[protein] + diphosphate. The enzyme catalyses L-threonyl-[protein] + ATP = 3-O-(5'-adenylyl)-L-threonyl-[protein] + diphosphate. The catalysed reaction is L-tyrosyl-[protein] + ATP = O-(5'-adenylyl)-L-tyrosyl-[protein] + diphosphate. It carries out the reaction L-histidyl-[protein] + UTP = N(tele)-(5'-uridylyl)-L-histidyl-[protein] + diphosphate. It catalyses the reaction L-seryl-[protein] + UTP = O-(5'-uridylyl)-L-seryl-[protein] + diphosphate. The enzyme catalyses L-tyrosyl-[protein] + UTP = O-(5'-uridylyl)-L-tyrosyl-[protein] + diphosphate. In terms of biological role, nucleotidyltransferase involved in the post-translational modification of proteins. It can catalyze the addition of adenosine monophosphate (AMP) or uridine monophosphate (UMP) to a protein, resulting in modifications known as AMPylation and UMPylation. The sequence is that of Protein nucleotidyltransferase YdiU from Herminiimonas arsenicoxydans.